Consider the following 88-residue polypeptide: uncharacterized protein (88 aa).

Positions 1 to 22 (MGLTLKEHAEVCMALAESSASA) are cleaved as a signal peptide.

This is an uncharacterized protein from Haemophilus influenzae (strain ATCC 51907 / DSM 11121 / KW20 / Rd).